The sequence spans 722 residues: Golgin subfamily A member 5 (722 aa).

At 1 to 689 the chain is on the cytoplasmic side; the sequence is MSWFTDLAGR…IFLRRYPIAR (689 aa). Disordered stretches follow at residues 90 to 158 and 194 to 215; these read TRSS…VKPI and TLSD…SHEL. Low complexity predominate over residues 91-109; it reads RSSIESSHNSSVNVSSHRS. The span at 134–148 shows a compositional bias: basic and acidic residues; sequence DKVHSSSQKETRKES. The span at 149–158 shows a compositional bias: polar residues; that stretch reads ASVNQAVKPI. A compositionally biased stretch (low complexity) spans 195–209; the sequence is LSDSGSSASLSTTGD. Positions 211–622 form a coiled coil; it reads KSHELSNLRL…LEHQLKNVQG (412 aa). The chain crosses the membrane as a helical; Anchor for type IV membrane protein span at residues 690-710; it reads VFIIIYMALLHLWVMIVLLTY. Over 711–722 the chain is Lumenal; that stretch reads TPEMHHDTPSGK.

It is found in the golgi apparatus membrane. Involved in maintaining Golgi structure. Stimulates the formation of Golgi stacks and ribbons. Involved in intra-Golgi retrograde transport. This is Golgin subfamily A member 5 (golga5) from Xenopus laevis (African clawed frog).